Consider the following 222-residue polypeptide: Kinetochore protein Spc25 (222 aa).

Residues 51 to 86 adopt a coiled-coil conformation; that stretch reads RHQRKVGKLQKVLMERREELDKRVSFIEELDRELEA.

This sequence belongs to the SPC25 family. As to quaternary structure, component of the Ndc80 complex, which is composed of Ndc80, Nuf2 and Spc25.

It is found in the nucleus. The protein localises to the chromosome. It localises to the centromere. The protein resides in the kinetochore. Acts as a component of the essential kinetochore-associated Ndc80 complex, which is required for chromosome segregation and spindle checkpoint activity during meiosis and mitosis. Required for kinetochore integrity and the organization of stable microtubule binding sites in the outer plate of the kinetochore. Participates in SAC signaling that responds specifically to disruptions in spindle microtubule dynamics. The NDC80 complex synergistically enhances the affinity of the SKA1 complex for microtubules and may allow the NDC80 complex to track depolymerizing microtubules. The protein is Kinetochore protein Spc25 of Drosophila melanogaster (Fruit fly).